A 276-amino-acid chain; its full sequence is Energy-coupling factor transporter ATP-binding protein EcfA2 (276 aa).

In terms of domain architecture, ABC transporter spans 1–233 (MKTPFERLAL…GEEMAGWGLD (233 aa)). Residue 27-34 (GHTGSGKS) participates in ATP binding. The Proton acceptor role is filled by Glu158.

This sequence belongs to the ABC transporter superfamily. Energy-coupling factor EcfA family. As to quaternary structure, forms a stable energy-coupling factor (ECF) transporter complex composed of 2 membrane-embedded substrate-binding proteins (S component), 2 ATP-binding proteins (A component) and 2 transmembrane proteins (T component).

Its subcellular location is the cell membrane. In terms of biological role, ATP-binding (A) component of a common energy-coupling factor (ECF) ABC-transporter complex. Unlike classic ABC transporters this ECF transporter provides the energy necessary to transport a number of different substrates. The chain is Energy-coupling factor transporter ATP-binding protein EcfA2 from Bacillus subtilis (strain 168).